The sequence spans 289 residues: 4-diphosphocytidyl-2-C-methyl-D-erythritol kinase (289 aa).

Residue lysine 10 is part of the active site. An ATP-binding site is contributed by 94 to 104 (PVAAGLAGGSS). The active site involves aspartate 136.

The protein belongs to the GHMP kinase family. IspE subfamily.

The enzyme catalyses 4-CDP-2-C-methyl-D-erythritol + ATP = 4-CDP-2-C-methyl-D-erythritol 2-phosphate + ADP + H(+). It participates in isoprenoid biosynthesis; isopentenyl diphosphate biosynthesis via DXP pathway; isopentenyl diphosphate from 1-deoxy-D-xylulose 5-phosphate: step 3/6. Its function is as follows. Catalyzes the phosphorylation of the position 2 hydroxy group of 4-diphosphocytidyl-2C-methyl-D-erythritol. This chain is 4-diphosphocytidyl-2-C-methyl-D-erythritol kinase, found in Bacillus velezensis (strain DSM 23117 / BGSC 10A6 / LMG 26770 / FZB42) (Bacillus amyloliquefaciens subsp. plantarum).